Here is a 628-residue protein sequence, read N- to C-terminus: (-)-beta-pinene synthase 1, chloroplastic (628 aa).

The N-terminal 51 residues, 1 to 51, are a transit peptide targeting the chloroplast; it reads MDLISVLPSASKSCVCLHKPLSSSTHKLKPFCRTIRILGMPRPRKSVLMVS. The Mg(2+) site is built by D379, D383, and D531. Positions 379–383 match the DDXXD motif motif; it reads DDMYD.

Belongs to the terpene synthase family. Tpsd subfamily. It depends on Mg(2+) as a cofactor. The cofactor is Mn(2+).

Its subcellular location is the plastid. The protein localises to the chloroplast. The catalysed reaction is (2E)-geranyl diphosphate = (1S,5S)-beta-pinene + diphosphate. It catalyses the reaction (2E)-geranyl diphosphate = (1S,5S)-alpha-pinene + diphosphate. The protein operates within terpene metabolism; oleoresin biosynthesis. It participates in secondary metabolite biosynthesis; terpenoid biosynthesis. Functionally, monoterpene synthase (TPS) involved in the biosynthesis of monoterpene natural products included in conifer oleoresin secretions and volatile emissions; these compounds contribute to biotic and abiotic stress defense against herbivores and pathogens. Catalyzes the conversion of (2E)-geranyl diphosphate (GPP) to (-)-beta-pinene and, to a lower extent, to (-)-alpha-pinene. This Pinus banksiana (Jack pine) protein is (-)-beta-pinene synthase 1, chloroplastic.